Here is a 732-residue protein sequence, read N- to C-terminus: Catalase-peroxidase (732 aa).

A disordered region spans residues 1–26 (MDAKTDDQGGKCPFPHGGGSRGHRNR). A cross-link (tryptophyl-tyrosyl-methioninium (Trp-Tyr) (with M-245)) is located at residues 97 to 219 (WHSAGTYRTT…LGAVQMGLIY (123 aa)). His-98 acts as the Proton acceptor in catalysis. A cross-link (tryptophyl-tyrosyl-methioninium (Tyr-Met) (with W-97)) is located at residues 219-245 (YVNPEGPNGNPDPVAAAKDIRETFARM). Residue His-260 coordinates heme b.

Belongs to the peroxidase family. Peroxidase/catalase subfamily. In terms of assembly, homodimer or homotetramer. It depends on heme b as a cofactor. Post-translationally, formation of the three residue Trp-Tyr-Met cross-link is important for the catalase, but not the peroxidase activity of the enzyme.

It carries out the reaction H2O2 + AH2 = A + 2 H2O. The enzyme catalyses 2 H2O2 = O2 + 2 H2O. In terms of biological role, bifunctional enzyme with both catalase and broad-spectrum peroxidase activity. The polypeptide is Catalase-peroxidase (Rhodopseudomonas palustris (strain BisB5)).